The following is a 485-amino-acid chain: NADH-quinone oxidoreductase subunit N (485 aa).

A run of 14 helical transmembrane segments spans residues 8–28 (LIAL…MLSI), 35–55 (FLNA…LWFV), 71–91 (GFAM…CTFA), 105–125 (FYLL…ANHL), 127–147 (SLFL…GYAF), 159–179 (YTIL…LVYA), 203–223 (LLAG…LVPF), 235–255 (PAPV…GVVM), 271–291 (VVLA…ALSQ), 297–317 (LLGY…IALQ), 326–346 (VGGY…VVSL), 373–393 (AAVM…LGFI), 408–430 (WWLV…RVAV), and 455–475 (IVVL…QPLI).

The protein belongs to the complex I subunit 2 family. NDH-1 is composed of 13 different subunits. Subunits NuoA, H, J, K, L, M, N constitute the membrane sector of the complex.

Its subcellular location is the cell inner membrane. The enzyme catalyses a quinone + NADH + 5 H(+)(in) = a quinol + NAD(+) + 4 H(+)(out). Its function is as follows. NDH-1 shuttles electrons from NADH, via FMN and iron-sulfur (Fe-S) centers, to quinones in the respiratory chain. The immediate electron acceptor for the enzyme in this species is believed to be ubiquinone. Couples the redox reaction to proton translocation (for every two electrons transferred, four hydrogen ions are translocated across the cytoplasmic membrane), and thus conserves the redox energy in a proton gradient. The chain is NADH-quinone oxidoreductase subunit N from Shigella boydii serotype 18 (strain CDC 3083-94 / BS512).